The sequence spans 118 residues: Fluoride-specific ion channel FluC 2 (118 aa).

A run of 4 helical transmembrane segments spans residues methionine 1–isoleucine 21, phenylalanine 33–glycine 53, glycine 55–phenylalanine 75, and isoleucine 93–methionine 113. 2 residues coordinate Na(+): glycine 70 and threonine 73.

This sequence belongs to the fluoride channel Fluc/FEX (TC 1.A.43) family.

Its subcellular location is the cell membrane. It catalyses the reaction fluoride(in) = fluoride(out). Na(+) is not transported, but it plays an essential structural role and its presence is essential for fluoride channel function. In terms of biological role, fluoride-specific ion channel. Important for reducing fluoride concentration in the cell, thus reducing its toxicity. This chain is Fluoride-specific ion channel FluC 2, found in Bacillus cereus (strain ATCC 10987 / NRS 248).